The sequence spans 966 residues: Glycine dehydrogenase (decarboxylating) (966 aa).

K713 bears the N6-(pyridoxal phosphate)lysine mark.

Belongs to the GcvP family. The glycine cleavage system is composed of four proteins: P, T, L and H. It depends on pyridoxal 5'-phosphate as a cofactor.

The enzyme catalyses N(6)-[(R)-lipoyl]-L-lysyl-[glycine-cleavage complex H protein] + glycine + H(+) = N(6)-[(R)-S(8)-aminomethyldihydrolipoyl]-L-lysyl-[glycine-cleavage complex H protein] + CO2. Its function is as follows. The glycine cleavage system catalyzes the degradation of glycine. The P protein binds the alpha-amino group of glycine through its pyridoxal phosphate cofactor; CO(2) is released and the remaining methylamine moiety is then transferred to the lipoamide cofactor of the H protein. The sequence is that of Glycine dehydrogenase (decarboxylating) from Psychromonas ingrahamii (strain DSM 17664 / CCUG 51855 / 37).